A 158-amino-acid polypeptide reads, in one-letter code: SsrA-binding protein (158 aa).

It belongs to the SmpB family.

It localises to the cytoplasm. Required for rescue of stalled ribosomes mediated by trans-translation. Binds to transfer-messenger RNA (tmRNA), required for stable association of tmRNA with ribosomes. tmRNA and SmpB together mimic tRNA shape, replacing the anticodon stem-loop with SmpB. tmRNA is encoded by the ssrA gene; the 2 termini fold to resemble tRNA(Ala) and it encodes a 'tag peptide', a short internal open reading frame. During trans-translation Ala-aminoacylated tmRNA acts like a tRNA, entering the A-site of stalled ribosomes, displacing the stalled mRNA. The ribosome then switches to translate the ORF on the tmRNA; the nascent peptide is terminated with the 'tag peptide' encoded by the tmRNA and targeted for degradation. The ribosome is freed to recommence translation, which seems to be the essential function of trans-translation. In Pseudoalteromonas atlantica (strain T6c / ATCC BAA-1087), this protein is SsrA-binding protein.